We begin with the raw amino-acid sequence, 429 residues long: Histidine--tRNA ligase (429 aa).

The protein belongs to the class-II aminoacyl-tRNA synthetase family. As to quaternary structure, homodimer.

It is found in the cytoplasm. It carries out the reaction tRNA(His) + L-histidine + ATP = L-histidyl-tRNA(His) + AMP + diphosphate + H(+). The chain is Histidine--tRNA ligase from Pseudomonas fluorescens (strain Pf0-1).